A 149-amino-acid chain; its full sequence is Large ribosomal subunit protein uL13 (149 aa).

Belongs to the universal ribosomal protein uL13 family. In terms of assembly, part of the 50S ribosomal subunit.

Its function is as follows. This protein is one of the early assembly proteins of the 50S ribosomal subunit, although it is not seen to bind rRNA by itself. It is important during the early stages of 50S assembly. This Chlorobium phaeobacteroides (strain DSM 266 / SMG 266 / 2430) protein is Large ribosomal subunit protein uL13.